Consider the following 92-residue polypeptide: Small ribosomal subunit protein uS19 (92 aa).

The protein belongs to the universal ribosomal protein uS19 family.

Protein S19 forms a complex with S13 that binds strongly to the 16S ribosomal RNA. This is Small ribosomal subunit protein uS19 from Rhodopseudomonas palustris (strain HaA2).